Consider the following 325-residue polypeptide: Delta(1)-pyrroline-2-carboxylate reductase (325 aa).

Belongs to the ornithine cyclodeaminase/mu-crystallin family.

It carries out the reaction L-proline + NAD(+) = 1-pyrroline-2-carboxylate + NADH + H(+). The enzyme catalyses L-proline + NADP(+) = 1-pyrroline-2-carboxylate + NADPH + H(+). In terms of biological role, catalyzes the reduction of Delta(1)-pyrroline-2-carboxylate (Pyr2C) to L-proline, using preferentially NADPH over NADH as the electron donor. Is likely involved in a degradation pathway that converts trans-3-hydroxy-L-proline (t3LHyp) to L-proline, which allows B.cereus to grow on t3LHyp as a sole carbon source. The protein is Delta(1)-pyrroline-2-carboxylate reductase of Bacillus cereus (strain ATCC 14579 / DSM 31 / CCUG 7414 / JCM 2152 / NBRC 15305 / NCIMB 9373 / NCTC 2599 / NRRL B-3711).